Here is a 207-residue protein sequence, read N- to C-terminus: Segregation and condensation protein B (207 aa).

A disordered region spans residues 173 to 207 (DDTAESDNDSADLYYRQFEQTLNETGPETAPKGEQ).

The protein belongs to the ScpB family. In terms of assembly, homodimer. Homodimerization may be required to stabilize the binding of ScpA to the Smc head domains. Component of a cohesin-like complex composed of ScpA, ScpB and the Smc homodimer, in which ScpA and ScpB bind to the head domain of Smc. The presence of the three proteins is required for the association of the complex with DNA.

It is found in the cytoplasm. In terms of biological role, participates in chromosomal partition during cell division. May act via the formation of a condensin-like complex containing Smc and ScpA that pull DNA away from mid-cell into both cell halves. The protein is Segregation and condensation protein B of Latilactobacillus sakei subsp. sakei (strain 23K) (Lactobacillus sakei subsp. sakei).